The following is a 120-amino-acid chain: Small ribosomal subunit protein uS13 (120 aa).

The interval 92–120 (RRGLPCRGQRTRTNARTRKGPRKPIAGKK) is disordered.

It belongs to the universal ribosomal protein uS13 family. Part of the 30S ribosomal subunit. Forms a loose heterodimer with protein S19. Forms two bridges to the 50S subunit in the 70S ribosome.

Functionally, located at the top of the head of the 30S subunit, it contacts several helices of the 16S rRNA. In the 70S ribosome it contacts the 23S rRNA (bridge B1a) and protein L5 of the 50S subunit (bridge B1b), connecting the 2 subunits; these bridges are implicated in subunit movement. Contacts the tRNAs in the A and P-sites. The polypeptide is Small ribosomal subunit protein uS13 (Laribacter hongkongensis (strain HLHK9)).